Reading from the N-terminus, the 116-residue chain is Large ribosomal subunit protein bL19 (116 aa).

It belongs to the bacterial ribosomal protein bL19 family.

This protein is located at the 30S-50S ribosomal subunit interface and may play a role in the structure and function of the aminoacyl-tRNA binding site. In Mannheimia succiniciproducens (strain KCTC 0769BP / MBEL55E), this protein is Large ribosomal subunit protein bL19.